Here is a 154-residue protein sequence, read N- to C-terminus: Transcriptional repressor NrdR (154 aa).

The segment at 3-34 is a zinc-finger region; sequence CPFCRHPDSRVVDSREADEGQAIRRRRSCPEC. One can recognise an ATP-cone domain in the interval 46-136; that stretch reads LSVVKRSGVT…VYRSFSSAED (91 aa).

This sequence belongs to the NrdR family. Zn(2+) serves as cofactor.

Its function is as follows. Negatively regulates transcription of bacterial ribonucleotide reductase nrd genes and operons by binding to NrdR-boxes. In Rhodococcus jostii (strain RHA1), this protein is Transcriptional repressor NrdR.